Consider the following 264-residue polypeptide: Thymidylate synthase (264 aa).

Arginine 21 contributes to the dUMP binding site. Histidine 51 serves as a coordination point for (6R)-5,10-methylene-5,6,7,8-tetrahydrofolate. 126–127 (RR) lines the dUMP pocket. Cysteine 146 serves as the catalytic Nucleophile. Residues 166 to 169 (RSCD), asparagine 177, and 207 to 209 (HLY) contribute to the dUMP site. Aspartate 169 contacts (6R)-5,10-methylene-5,6,7,8-tetrahydrofolate. Alanine 263 contacts (6R)-5,10-methylene-5,6,7,8-tetrahydrofolate.

The protein belongs to the thymidylate synthase family. Bacterial-type ThyA subfamily. As to quaternary structure, homodimer.

The protein resides in the cytoplasm. It carries out the reaction dUMP + (6R)-5,10-methylene-5,6,7,8-tetrahydrofolate = 7,8-dihydrofolate + dTMP. It functions in the pathway pyrimidine metabolism; dTTP biosynthesis. Catalyzes the reductive methylation of 2'-deoxyuridine-5'-monophosphate (dUMP) to 2'-deoxythymidine-5'-monophosphate (dTMP) while utilizing 5,10-methylenetetrahydrofolate (mTHF) as the methyl donor and reductant in the reaction, yielding dihydrofolate (DHF) as a by-product. This enzymatic reaction provides an intracellular de novo source of dTMP, an essential precursor for DNA biosynthesis. In Shigella dysenteriae serotype 1 (strain Sd197), this protein is Thymidylate synthase.